Consider the following 509-residue polypeptide: Photosystem II CP47 reaction center protein (509 aa).

Transmembrane regions (helical) follow at residues 21-36, 101-115, 140-156, 203-218, 237-252, and 457-472; these read SVHL…WAGS, IVLS…VWHW, GIHL…FGAF, IAAG…FHLT, VLSS…AFVV, and VFAL…HGAR.

It belongs to the PsbB/PsbC family. PsbB subfamily. PSII is composed of 1 copy each of membrane proteins PsbA, PsbB, PsbC, PsbD, PsbE, PsbF, PsbH, PsbI, PsbJ, PsbK, PsbL, PsbM, PsbT, PsbX, PsbY, PsbZ, Psb30/Ycf12, peripheral proteins PsbO, CyanoQ (PsbQ), PsbU, PsbV and a large number of cofactors. It forms dimeric complexes. The cofactor is Binds multiple chlorophylls. PSII binds additional chlorophylls, carotenoids and specific lipids..

It localises to the cellular thylakoid membrane. One of the components of the core complex of photosystem II (PSII). It binds chlorophyll and helps catalyze the primary light-induced photochemical processes of PSII. PSII is a light-driven water:plastoquinone oxidoreductase, using light energy to abstract electrons from H(2)O, generating O(2) and a proton gradient subsequently used for ATP formation. This is Photosystem II CP47 reaction center protein from Nostoc sp. (strain PCC 7120 / SAG 25.82 / UTEX 2576).